Here is a 64-residue protein sequence, read N- to C-terminus: Orcokinin peptides (64 aa).

Propeptides lie at residues 1–6 and 23–24; these read MNIRPG and NI.

Belongs to the orcokinin family. Orcokinin-3 is expressed throughout the central nervous system (at protein level).

Its subcellular location is the secreted. In terms of biological role, myotropic peptides. This Camponotus floridanus (Florida carpenter ant) protein is Orcokinin peptides.